Reading from the N-terminus, the 212-residue chain is MKRPALILICLLLQACSATTKELGNSLWDSLFGTPGVQLTDDDIQNMPYASQYMQLNGGPQLFVVLAFAEDGQQKWVTQDQATLVTQHGRLVKTLLGGDNLIEVNNLAADPLIKPAQIVDGASWTRTMGWTEYQQVRYATARSVFKWDGTDTVKVGSDETPVRVLDEEVSTDQARWHNRYWIDSEGQIRQSEQYLGADYFPVKTTLIKAAKQ.

An N-terminal signal peptide occupies residues 1-15; that stretch reads MKRPALILICLLLQA. C16 carries the N-palmitoyl cysteine lipid modification. The S-diacylglycerol cysteine moiety is linked to residue C16.

It to E.coli YmcC.

The protein resides in the cell membrane. This is an uncharacterized protein from Escherichia coli (strain K12).